The primary structure comprises 470 residues: Ras-like GTPase HI_1637 (470 aa).

The short motif at 27 to 34 (GLSRSGKT) is the Walker A motif element. GTP-binding residues include serine 29, glycine 32, lysine 33, threonine 34, alanine 35, tryptophan 98, serine 101, threonine 102, arginine 103, lysine 342, aspartate 344, and histidine 345. GDP contacts are provided by glycine 32, lysine 33, threonine 34, alanine 35, tryptophan 98, serine 101, and threonine 102. GDP-binding residues include lysine 342, aspartate 344, histidine 345, alanine 383, and valine 384. Position 384 (valine 384) interacts with GTP.

This sequence to E.coli YcjX. Monomer in solution. Mg(2+) is required as a cofactor.

The catalysed reaction is GTP + H2O = GDP + phosphate + H(+). Its activity is regulated as follows. Alternates between an inactive form bound to GDP and an active form bound to GTP. Likely activated by a guanine nucleotide-exchange factor (GEF). In terms of biological role, binds GTP and GDP. Has intrinsic GTPase activity. Does not hydrolyze ATP. May act as a transducer of stress responses. This chain is Ras-like GTPase HI_1637, found in Haemophilus influenzae (strain ATCC 51907 / DSM 11121 / KW20 / Rd).